The following is a 172-amino-acid chain: 3-phenylpropionate/cinnamic acid dioxygenase subunit beta (172 aa).

This sequence belongs to the bacterial ring-hydroxylating dioxygenase beta subunit family. As to quaternary structure, this dioxygenase system consists of four proteins: the two subunits of the hydroxylase component (HcaE and HcaF), a ferredoxin (HcaC) and a ferredoxin reductase (HcaD).

It catalyses the reaction 3-phenylpropanoate + NADH + O2 + H(+) = 3-(cis-5,6-dihydroxycyclohexa-1,3-dien-1-yl)propanoate + NAD(+). The enzyme catalyses (E)-cinnamate + NADH + O2 + H(+) = (2E)-3-(cis-5,6-dihydroxycyclohexa-1,3-dien-1-yl)prop-2-enoate + NAD(+). The protein operates within aromatic compound metabolism; 3-phenylpropanoate degradation. Functionally, part of the multicomponent 3-phenylpropionate dioxygenase. Converts 3-phenylpropionic acid (PP) and cinnamic acid (CI) into 3-phenylpropionate-dihydrodiol (PP-dihydrodiol) and cinnamic acid-dihydrodiol (CI-dihydrodiol), respectively. This Escherichia coli O7:K1 (strain IAI39 / ExPEC) protein is 3-phenylpropionate/cinnamic acid dioxygenase subunit beta.